We begin with the raw amino-acid sequence, 56 residues long: Large ribosomal subunit protein bL32 (56 aa).

The interval 1–26 (MAVQQNKKSRSKRGMRRSHDALSTAQ) is disordered. Over residues 7–16 (KKSRSKRGMR) the composition is skewed to basic residues.

The protein belongs to the bacterial ribosomal protein bL32 family.

In Shewanella baltica (strain OS155 / ATCC BAA-1091), this protein is Large ribosomal subunit protein bL32.